The following is a 149-amino-acid chain: Transcription antitermination protein NusB (149 aa).

Belongs to the NusB family.

Its function is as follows. Involved in transcription antitermination. Required for transcription of ribosomal RNA (rRNA) genes. Binds specifically to the boxA antiterminator sequence of the ribosomal RNA (rrn) operons. The chain is Transcription antitermination protein NusB from Acinetobacter baylyi (strain ATCC 33305 / BD413 / ADP1).